The primary structure comprises 723 residues: Fatty acid oxidation complex subunit alpha (723 aa).

The enoyl-CoA hydratase/isomerase stretch occupies residues 1-189 (MIYQANTLQV…KVGLLDAIVE (189 aa)). Substrate is bound at residue aspartate 296. The tract at residues 311–723 (NKATERAAVL…FYDGQQASSL (413 aa)) is 3-hydroxyacyl-CoA dehydrogenase. Residues methionine 325, aspartate 344, 401–403 (VVE), lysine 408, and serine 430 contribute to the NAD(+) site. Histidine 451 (for 3-hydroxyacyl-CoA dehydrogenase activity) is an active-site residue. Asparagine 454 lines the NAD(+) pocket. Residues asparagine 501 and tyrosine 661 each contribute to the substrate site.

The protein in the N-terminal section; belongs to the enoyl-CoA hydratase/isomerase family. In the C-terminal section; belongs to the 3-hydroxyacyl-CoA dehydrogenase family. As to quaternary structure, heterotetramer of two alpha chains (FadB) and two beta chains (FadA).

It catalyses the reaction a (3S)-3-hydroxyacyl-CoA + NAD(+) = a 3-oxoacyl-CoA + NADH + H(+). The enzyme catalyses a (3S)-3-hydroxyacyl-CoA = a (2E)-enoyl-CoA + H2O. The catalysed reaction is a 4-saturated-(3S)-3-hydroxyacyl-CoA = a (3E)-enoyl-CoA + H2O. It carries out the reaction (3S)-3-hydroxybutanoyl-CoA = (3R)-3-hydroxybutanoyl-CoA. It catalyses the reaction a (3Z)-enoyl-CoA = a 4-saturated (2E)-enoyl-CoA. The enzyme catalyses a (3E)-enoyl-CoA = a 4-saturated (2E)-enoyl-CoA. Its pathway is lipid metabolism; fatty acid beta-oxidation. Its function is as follows. Involved in the aerobic and anaerobic degradation of long-chain fatty acids via beta-oxidation cycle. Catalyzes the formation of 3-oxoacyl-CoA from enoyl-CoA via L-3-hydroxyacyl-CoA. It can also use D-3-hydroxyacyl-CoA and cis-3-enoyl-CoA as substrate. This Vibrio atlanticus (strain LGP32) (Vibrio splendidus (strain Mel32)) protein is Fatty acid oxidation complex subunit alpha.